The primary structure comprises 331 residues: 4-hydroxythreonine-4-phosphate dehydrogenase (331 aa).

Substrate is bound by residues histidine 137 and threonine 138. Positions 167, 212, and 267 each coordinate a divalent metal cation. Residues lysine 275, asparagine 284, and arginine 293 each contribute to the substrate site.

Belongs to the PdxA family. Homodimer. Zn(2+) serves as cofactor. The cofactor is Mg(2+). Requires Co(2+) as cofactor.

It localises to the cytoplasm. It catalyses the reaction 4-(phosphooxy)-L-threonine + NAD(+) = 3-amino-2-oxopropyl phosphate + CO2 + NADH. The protein operates within cofactor biosynthesis; pyridoxine 5'-phosphate biosynthesis; pyridoxine 5'-phosphate from D-erythrose 4-phosphate: step 4/5. Functionally, catalyzes the NAD(P)-dependent oxidation of 4-(phosphooxy)-L-threonine (HTP) into 2-amino-3-oxo-4-(phosphooxy)butyric acid which spontaneously decarboxylates to form 3-amino-2-oxopropyl phosphate (AHAP). This chain is 4-hydroxythreonine-4-phosphate dehydrogenase, found in Yersinia pestis bv. Antiqua (strain Angola).